Here is a 358-residue protein sequence, read N- to C-terminus: 3-ketosteroid-9-alpha-monooxygenase, ferredoxin reductase component (358 aa).

One can recognise an FAD-binding FR-type domain in the interval 12–124; sequence DHVLELQIAE…LAPSGNFVPT (113 aa). One can recognise a 2Fe-2S ferredoxin-type domain in the interval 269–358; it reads ATAVVELDGQ…SDSVEVTYDE (90 aa). Cys305, Cys310, Cys313, and Cys343 together coordinate [2Fe-2S] cluster.

As to quaternary structure, monomer. The two-component system 3-ketosteroid-9-alpha-monooxygenase is composed of an oxygenase component KshA and a reductase component KshB. The cofactor is FAD. [2Fe-2S] cluster is required as a cofactor.

The enzyme catalyses androsta-1,4-diene-3,17-dione + 2 reduced [2Fe-2S]-[ferredoxin] + O2 + 2 H(+) = 9alpha-hydroxyandrosta-1,4-diene-3,17-dione + 2 oxidized [2Fe-2S]-[ferredoxin] + H2O. The protein operates within lipid metabolism; steroid biosynthesis. Its function is as follows. Involved in the degradation of cholesterol. Catalyzes the introduction of a 9a-hydroxyl moiety into 1,4-androstadiene-3,17-dione (ADD) to yield the 9alpha-hydroxy-1,4-androstadiene-3,17-dione (9OHADD) intermediate which spontaneously form 3-hydroxy-9,10-seconandrost-1,3,5(10)-triene-9,17-dione (HSA) via the meta-cleavage of ring B with concomitant aromatization of ring A. This is 3-ketosteroid-9-alpha-monooxygenase, ferredoxin reductase component (hmp) from Mycobacterium tuberculosis (strain CDC 1551 / Oshkosh).